The primary structure comprises 331 residues: 4-hydroxythreonine-4-phosphate dehydrogenase (331 aa).

Positions 137 and 138 each coordinate substrate. H167, H212, and H267 together coordinate a divalent metal cation. The substrate site is built by K275, N284, and R293.

The protein belongs to the PdxA family. In terms of assembly, homodimer. It depends on Zn(2+) as a cofactor. Mg(2+) serves as cofactor. Requires Co(2+) as cofactor.

Its subcellular location is the cytoplasm. The catalysed reaction is 4-(phosphooxy)-L-threonine + NAD(+) = 3-amino-2-oxopropyl phosphate + CO2 + NADH. The protein operates within cofactor biosynthesis; pyridoxine 5'-phosphate biosynthesis; pyridoxine 5'-phosphate from D-erythrose 4-phosphate: step 4/5. Functionally, catalyzes the NAD(P)-dependent oxidation of 4-(phosphooxy)-L-threonine (HTP) into 2-amino-3-oxo-4-(phosphooxy)butyric acid which spontaneously decarboxylates to form 3-amino-2-oxopropyl phosphate (AHAP). The chain is 4-hydroxythreonine-4-phosphate dehydrogenase from Yersinia enterocolitica serotype O:8 / biotype 1B (strain NCTC 13174 / 8081).